We begin with the raw amino-acid sequence, 204 residues long: Ribonuclease HII (204 aa).

The RNase H type-2 domain maps to 16–204; the sequence is ESIAGCDEVG…RRSFLKKILK (189 aa). A divalent metal cation is bound by residues Asp-22, Glu-23, and Asp-120.

It belongs to the RNase HII family. The cofactor is Mn(2+). It depends on Mg(2+) as a cofactor.

It is found in the cytoplasm. It catalyses the reaction Endonucleolytic cleavage to 5'-phosphomonoester.. Endonuclease that specifically degrades the RNA of RNA-DNA hybrids. The chain is Ribonuclease HII from Alkaliphilus metalliredigens (strain QYMF).